Reading from the N-terminus, the 554-residue chain is uncharacterized protein (554 aa).

5 helical membrane passes run 13 to 31 (SVAH…GVYL), 36 to 58 (IFGV…HFGF), 73 to 92 (LILF…FSSF), 99 to 121 (LNLL…YYLW), and 161 to 183 (IALG…IIAI). 2 consecutive RCK C-terminal domains span residues 199-281 (KTQS…FIGK) and 282-366 (EVEL…VLGN). Transmembrane regions (helical) follow at residues 376–395 (IVTI…LPIA), 405–422 (LGLA…GRFG), 442–464 (IGIV…QTVV), and 468–490 (GLLY…GAIA).

Belongs to the AAE transporter (TC 2.A.81) family.

The protein resides in the cell membrane. This is an uncharacterized protein from Bacteroides thetaiotaomicron (strain ATCC 29148 / DSM 2079 / JCM 5827 / CCUG 10774 / NCTC 10582 / VPI-5482 / E50).